A 344-amino-acid chain; its full sequence is Anthranilate phosphoribosyltransferase (344 aa).

Residues Gly-86, 89 to 90 (GD), Thr-94, 96 to 99 (NIST), 114 to 122 (KHGNKSASG), and Ser-126 each bind 5-phospho-alpha-D-ribose 1-diphosphate. Residue Gly-86 participates in anthranilate binding. Ser-98 lines the Mg(2+) pocket. Position 117 (Asn-117) interacts with anthranilate. Residue Arg-172 participates in anthranilate binding. The Mg(2+) site is built by Asp-231 and Glu-232.

Belongs to the anthranilate phosphoribosyltransferase family. As to quaternary structure, homodimer. The cofactor is Mg(2+).

The catalysed reaction is N-(5-phospho-beta-D-ribosyl)anthranilate + diphosphate = 5-phospho-alpha-D-ribose 1-diphosphate + anthranilate. The protein operates within amino-acid biosynthesis; L-tryptophan biosynthesis; L-tryptophan from chorismate: step 2/5. Its function is as follows. Catalyzes the transfer of the phosphoribosyl group of 5-phosphorylribose-1-pyrophosphate (PRPP) to anthranilate to yield N-(5'-phosphoribosyl)-anthranilate (PRA). This is Anthranilate phosphoribosyltransferase from Prochlorococcus marinus (strain MIT 9215).